The primary structure comprises 139 residues: Classical arabinogalactan protein 3 (139 aa).

The N-terminal stretch at methionine 1–alanine 21 is a signal peptide. The residue at position 22 (glutamine 22) is a Pyrrolidone carboxylic acid. The disordered stretch occupies residues threonine 30–alanine 115. Composition is skewed to pro residues over residues alanine 46 to threonine 77 and proline 97 to alanine 107. Residue aspartate 116 is the site of GPI-anchor amidated aspartate attachment. Residues serine 117 to alanine 139 constitute a propeptide, removed in mature form.

Belongs to the classical AGP family. Post-translationally, O-glycosylated on the hydroxyproline residues. In terms of tissue distribution, expressed at a low level in roots.

The protein localises to the cell membrane. Proteoglycan that seems to be implicated in diverse developmental roles such as differentiation, cell-cell recognition, embryogenesis and programmed cell death. This chain is Classical arabinogalactan protein 3 (AGP3), found in Arabidopsis thaliana (Mouse-ear cress).